Here is a 217-residue protein sequence, read N- to C-terminus: Adenylate kinase (217 aa).

An ATP-binding site is contributed by glycine 10 to threonine 15. The segment at serine 30–valine 59 is NMP. Residues threonine 31, arginine 36, leucine 57–valine 59, glycine 85–arginine 88, and glutamine 92 each bind AMP. The interval glycine 126–aspartate 163 is LID. Arginine 127 is a binding site for ATP. Residues cysteine 130 and cysteine 133 each coordinate Zn(2+). Valine 136–tyrosine 137 is an ATP binding site. Zn(2+) is bound by residues cysteine 150 and aspartate 153. Residues arginine 160 and arginine 171 each coordinate AMP. Residue glutamine 199 participates in ATP binding.

This sequence belongs to the adenylate kinase family. As to quaternary structure, monomer.

Its subcellular location is the cytoplasm. The enzyme catalyses AMP + ATP = 2 ADP. The protein operates within purine metabolism; AMP biosynthesis via salvage pathway; AMP from ADP: step 1/1. Catalyzes the reversible transfer of the terminal phosphate group between ATP and AMP. Plays an important role in cellular energy homeostasis and in adenine nucleotide metabolism. This chain is Adenylate kinase, found in Aster yellows witches'-broom phytoplasma (strain AYWB).